The primary structure comprises 430 residues: Trigger factor (430 aa).

Residues 165-250 form the PPIase FKBP-type domain; it reads TDIAIFDFEG…LHQIKTKKIP (86 aa).

It belongs to the FKBP-type PPIase family. Tig subfamily.

Its subcellular location is the cytoplasm. The catalysed reaction is [protein]-peptidylproline (omega=180) = [protein]-peptidylproline (omega=0). Functionally, involved in protein export. Acts as a chaperone by maintaining the newly synthesized protein in an open conformation. Functions as a peptidyl-prolyl cis-trans isomerase. In Onion yellows phytoplasma (strain OY-M), this protein is Trigger factor.